The following is a 360-amino-acid chain: Protein RecA (360 aa).

69-76 (GPESSGKT) lines the ATP pocket.

Belongs to the RecA family.

The protein resides in the cytoplasm. Can catalyze the hydrolysis of ATP in the presence of single-stranded DNA, the ATP-dependent uptake of single-stranded DNA by duplex DNA, and the ATP-dependent hybridization of homologous single-stranded DNAs. It interacts with LexA causing its activation and leading to its autocatalytic cleavage. This is Protein RecA from Trichodesmium erythraeum (strain IMS101).